Reading from the N-terminus, the 323-residue chain is Pantothenate kinase (323 aa).

101-108 is a binding site for ATP; the sequence is GSVAVGKS.

The protein belongs to the prokaryotic pantothenate kinase family.

It is found in the cytoplasm. The enzyme catalyses (R)-pantothenate + ATP = (R)-4'-phosphopantothenate + ADP + H(+). It functions in the pathway cofactor biosynthesis; coenzyme A biosynthesis; CoA from (R)-pantothenate: step 1/5. The polypeptide is Pantothenate kinase (Paenarthrobacter aurescens (strain TC1)).